A 740-amino-acid polypeptide reads, in one-letter code: MKKRADPRKIKREEHKQKLSKLQERVDNFGEDEADKEVSKFEELPLSEATIEGLKNSHYVTCTDVQKRAIPPALQGHDLLGAARTGSGKTLAFLVPVLECLFRNKWSDVDGLGALVISPTRELAVQIFQVLRKIGRCHSFSAGLVIGGKDVAMEADRLAKLNILICTPGRLLQHMDQTSGFDLSNVKMLVLDEADRILDMGFKKTMDAILENLPVDRQTLLFSATQTKSVSDLARLSLADPKYISANPDTTSSTPKNLEQNYVCVELQDKLDTLWGFLRTHTKFKIIVFFSSSKQVRYVYETFRTLQPGIPLLHLHGKQKQGARMDVVSKFSKASSSCLFATDIVARGIDFPAVHWVVQVDCPEDAATYIHRVGRSARFGKSGKALLFLTPTEEPAMIQRLEAKHIPINKLTIRPNKKKSIKNQLQALCFKSPEIKYLGQKAFISYYKSIFIQKDKEIFQFEKIPSEAFAESLGLPGAPQIKLGKSAEKMKEEANAKKNQSRALQKLMRAGDDGVVSDDEKEVRTKMDRMFERKNQNVLSDHYLNMVKGDADEDEETGDFMTVKRQDHNLESDDDEDIANLPTSKRAAKQALSKKQSLKNKGLGTKTLFDDEGAPHALYEFDDEEDFKAAGPVESQVKEFVDRETKDMEEADVGDKELVKQKRAEKKRKRKEIERLRELDEYDEESEEEGDSEEEQAAKKPKWFQRDESSDEEEDDGVLEVEEPTTLEDLESLTSKLLKK.

The interval 1 to 37 (MKKRADPRKIKREEHKQKLSKLQERVDNFGEDEADKE) is disordered. Residues 7–28 (PRKIKREEHKQKLSKLQERVDN) are compositionally biased toward basic and acidic residues. The Q motif motif lies at 39–67 (SKFEELPLSEATIEGLKNSHYVTCTDVQK). Residues 70-244 (IPPALQGHDL…RLSLADPKYI (175 aa)) form the Helicase ATP-binding domain. Position 83 to 90 (83 to 90 (ARTGSGKT)) interacts with ATP. The short motif at 192-195 (DEAD) is the DEAD box element. In terms of domain architecture, Helicase C-terminal spans 257–421 (NLEQNYVCVE…TIRPNKKKSI (165 aa)). The segment at 565-740 (RQDHNLESDD…ESLTSKLLKK (176 aa)) is disordered. Residues 636-662 (QVKEFVDRETKDMEEADVGDKELVKQK) show a composition bias toward basic and acidic residues. 2 stretches are compositionally biased toward acidic residues: residues 680 to 695 (DEYDEESEEEGDSEEE) and 709 to 731 (SSDEEEDDGVLEVEEPTTLEDLE).

The protein belongs to the DEAD box helicase family. DDX10/DBP4 subfamily. In terms of assembly, interacts with the U3 and U14 snoRNAs. Associates with pre-ribosomal complexes.

Its subcellular location is the nucleus. The protein localises to the nucleolus. The enzyme catalyses ATP + H2O = ADP + phosphate + H(+). In terms of biological role, ATP-dependent RNA helicase required for ribosome biogenesis. Involved in the release of U14 snoRNA in pre-ribosomal complexes. Required for pre-rRNA cleavage at site A2. The sequence is that of ATP-dependent RNA helicase DBP4 (DBP4) from Yarrowia lipolytica (strain CLIB 122 / E 150) (Yeast).